Consider the following 498-residue polypeptide: PHD finger protein 10 (498 aa).

A compositionally biased stretch (low complexity) spans 1-10; it reads MAAAAGPGAA. The disordered stretch occupies residues 1-62; the sequence is MAAAAGPGAA…SSRSCETSSQ (62 aa). Ala-2 carries the post-translational modification N-acetylalanine. Phosphoserine occurs at positions 12, 36, and 50. Residues 89 to 185 form an essential to induce neural progenitor proliferation region; the sequence is MLQEQVSEYL…HYKEYSQMQQ (97 aa). The segment at 89-295 is SAY; it reads MLQEQVSEYL…PPLDPELPAL (207 aa). Residue Lys-241 forms a Glycyl lysine isopeptide (Lys-Gly) (interchain with G-Cter in SUMO2) linkage. A Phosphoserine modification is found at Ser-270. Residues 285–296 show a composition bias toward low complexity; it reads EPPLDPELPALD. Residues 285 to 368 form a disordered region; the sequence is EPPLDPELPA…KRSVLSKSVP (84 aa). Residues 292 to 334 are essential to induce neural progenitor proliferation; sequence LPALDSDGDSDDGEDGRGDEKRKNKGTSDSSSGNVSEGESPPD. 4 positions are modified to phosphoserine: Ser-297, Ser-301, Ser-327, and Ser-331. Residues 318–328 are compositionally biased toward polar residues; it reads TSDSSSGNVSE. Residues 345 to 359 are compositionally biased toward basic and acidic residues; the sequence is KSKDKAATPRKDGPK. The segment at 379–436 adopts a PHD-type 1; degenerate zinc-finger fold; it reads ICGICLKGKESNKKGKAESLIHCSQCENSGHPSCLDMTMELVSMIKTYPWQCMECKTC. Residue Lys-385 forms a Glycyl lysine isopeptide (Lys-Gly) (interchain with G-Cter in SUMO2) linkage. The segment at 438-481 adopts a PHD-type 2; degenerate zinc-finger fold; the sequence is ICGQPHHEEEMMFCDMCDRGYHTFCVGLGAIPSGRWICDCCQRA.

Belongs to the SAYP family. As to quaternary structure, component of neural progenitors-specific chromatin remodeling complex (npBAF complex) composed of at least, ARID1A/BAF250A or ARID1B/BAF250B, SMARCD1/BAF60A, SMARCD3/BAF60C, SMARCA2/BRM/BAF190B, SMARCA4/BRG1/BAF190A, SMARCB1/BAF47, SMARCC1/BAF155, SMARCE1/BAF57, SMARCC2/BAF170, PHF10/BAF45A, ACTL6A/BAF53A and actin. Interacts with ACTL6A/BAF53A, SMARCA2/BRM/BAF190B, SMARCA4/BRG1/BAF190A and PBRM1/BAF180.

The protein resides in the nucleus. Its function is as follows. Involved in transcription activity regulation by chromatin remodeling. Belongs to the neural progenitors-specific chromatin remodeling complex (npBAF complex) and is required for the proliferation of neural progenitors. During neural development a switch from a stem/progenitor to a post-mitotic chromatin remodeling mechanism occurs as neurons exit the cell cycle and become committed to their adult state. The transition from proliferating neural stem/progenitor cells to post-mitotic neurons requires a switch in subunit composition of the npBAF and nBAF complexes. As neural progenitors exit mitosis and differentiate into neurons, npBAF complexes which contain ACTL6A/BAF53A and PHF10/BAF45A, are exchanged for homologous alternative ACTL6B/BAF53B and DPF1/BAF45B or DPF3/BAF45C subunits in neuron-specific complexes (nBAF). The npBAF complex is essential for the self-renewal/proliferative capacity of the multipotent neural stem cells. The nBAF complex along with CREST plays a role regulating the activity of genes essential for dendrite growth. The chain is PHD finger protein 10 (PHF10) from Homo sapiens (Human).